A 700-amino-acid chain; its full sequence is Interleukin-1 receptor accessory protein-like 1-B (700 aa).

Positions 1-18 (MRSRVPLQILLYAAVIRS) are cleaved as a signal peptide. The Extracellular portion of the chain corresponds to 19 to 357 (LKVVSKRGSV…QLSRRELMYT (339 aa)). The 103-residue stretch at 32 to 134 (TDWSVDYLRY…YCMKVSMALT (103 aa)) folds into the Ig-like C2-type 1 domain. A disulfide bond links cysteine 53 and cysteine 118. Asparagine 63, asparagine 122, asparagine 138, asparagine 213, asparagine 264, and asparagine 331 each carry an N-linked (GlcNAc...) asparagine glycan. Ig-like C2-type domains follow at residues 143–232 (CYNS…TELT) and 242–350 (PKIL…IQLS). Cysteine 164 and cysteine 216 are disulfide-bonded. The cysteines at positions 267 and 334 are disulfide-linked. A helical transmembrane segment spans residues 358–378 (VELAGGLGAILLMLIFLVSLY). At 379–700 (KCYRIELMLF…RETSISSVIW (322 aa)) the chain is on the cytoplasmic side. The region spanning 403–559 (KDYDAYVSYT…RFWKQLQYEM (157 aa)) is the TIR domain. Residue glutamate 491 is part of the active site. The tract at residues 564–700 (PEPKLSHEQV…RETSISSVIW (137 aa)) is required for synaptic vesicle accumulation during synaptogenesis.

Belongs to the interleukin-1 receptor family.

The protein resides in the cell membrane. The protein localises to the cytoplasm. It carries out the reaction NAD(+) + H2O = ADP-D-ribose + nicotinamide + H(+). May regulate secretion and presynaptic differentiation through inhibition of the activity of N-type voltage-gated calcium channel. During presynaptic differentiation may regulate both synaptic vesicle accumulation in axon terminals and subsequent axon terminal remodeling. The protein is Interleukin-1 receptor accessory protein-like 1-B (il1rapl1b) of Danio rerio (Zebrafish).